The primary structure comprises 795 residues: ATP-dependent RNA helicase DHX15 (795 aa).

The disordered stretch occupies residues 1-108 (MSKRHRLDLG…HSTHAGHAGH (108 aa)). Residue Ser15 is modified to Phosphoserine. A compositionally biased stretch (basic and acidic residues) spans 20 to 62 (AGTDGKDRDRDRDREDRSKDRDRERDRGDREREREKEKEKELR). Residues 79-108 (ASHSAHSTHSAHSTHSTHSAHSTHAGHAGH) are compositionally biased toward low complexity. One can recognise a Helicase ATP-binding domain in the interval 147–313 (TDILVRHQSF…FDNCPLLTIP (167 aa)). 160 to 167 (GETGSGKT) is an ATP binding site. Residues 260-263 (DEAH) carry the DEAH box motif. The 181-residue stretch at 338–518 (TVIQIHMCEE…SVVLQLKKLG (181 aa)) folds into the Helicase C-terminal domain. Lys488 carries the post-translational modification N6-acetyllysine. Residue Lys786 forms a Glycyl lysine isopeptide (Lys-Gly) (interchain with G-Cter in SUMO2) linkage.

This sequence belongs to the DEAD box helicase family. DEAH subfamily. DDX15/PRP43 sub-subfamily. As to quaternary structure, component of the U11/U12 snRNPs that are part of the U12-type spliceosome. Identified in the Intron Large spliceosome complex (IL, also named intron lariat spliceosome), a post-mRNA release spliceosomal complex containing the excised intron, U2, U5 and U6 snRNPs, and splicing factors; the association may be transient. The IL complex exists in two distinct conformations, one with the DHX15 (ILS2) and one without (ILS1). Interacts with TFIP11 (via G-patch domain); indicative for a recruitment to the IL complex. Interacts with SSB/La. Interacts with GPATCH2 (via G-patch domain); promoting the RNA helicase activity. Interacts with NKRF (via G-patch domain); promoting the RNA helicase activity. Interacts with NLRP6. Ubiquitous.

The protein resides in the nucleus. The protein localises to the nucleolus. The enzyme catalyses ATP + H2O = ADP + phosphate + H(+). With respect to regulation, ATPase activity is enhanced upon binding to G-patch domain-containing proteins. G-patch domain-containing proteins act like a brace that tethers mobile sections of DHX15 together, stabilizing a functional conformation with high RNA affinity, thereby promoting the ATPase activity. RNA helicase involved in mRNA processing and antiviral innate immunity. Pre-mRNA processing factor involved in disassembly of spliceosomes after the release of mature mRNA. In cooperation with TFIP11 seem to be involved in the transition of the U2, U5 and U6 snRNP-containing IL complex to the snRNP-free IS complex leading to efficient debranching and turnover of excised introns. Plays a key role in antiviral innate immunity by promoting both MAVS-dependent signaling and NLRP6 inflammasome. Acts as an RNA virus sensor: recognizes and binds viral double stranded RNA (dsRNA) and activates the MAVS-dependent signaling to produce interferon-beta and interferon lambda-3 (IFNL3). Involved in intestinal antiviral innate immunity together with NLRP6: recognizes and binds viral dsRNA and promotes activation of the NLRP6 inflammasome in intestinal epithelial cells to restrict infection by enteric viruses. The NLRP6 inflammasome acts by promoting maturation and secretion of IL18 in the extracellular milieu. Also involved in antibacterial innate immunity by promoting Wnt-induced antimicrobial protein expression in Paneth cells. The polypeptide is ATP-dependent RNA helicase DHX15 (Homo sapiens (Human)).